The sequence spans 355 residues: Dual-specificity RNA methyltransferase RlmN (355 aa).

Glu86 serves as the catalytic Proton acceptor. A Radical SAM core domain is found at 105–338 (KEARYTVCVS…CTIRESKGLD (234 aa)). A disulfide bridge links Cys112 with Cys343. Residues Cys119, Cys123, and Cys126 each contribute to the [4Fe-4S] cluster site. S-adenosyl-L-methionine contacts are provided by residues 169 to 170 (GE), Ser201, 224 to 226 (SLH), and Asn300. Cys343 acts as the S-methylcysteine intermediate in catalysis.

The protein belongs to the radical SAM superfamily. RlmN family. Requires [4Fe-4S] cluster as cofactor.

It is found in the cytoplasm. The enzyme catalyses adenosine(2503) in 23S rRNA + 2 reduced [2Fe-2S]-[ferredoxin] + 2 S-adenosyl-L-methionine = 2-methyladenosine(2503) in 23S rRNA + 5'-deoxyadenosine + L-methionine + 2 oxidized [2Fe-2S]-[ferredoxin] + S-adenosyl-L-homocysteine. The catalysed reaction is adenosine(37) in tRNA + 2 reduced [2Fe-2S]-[ferredoxin] + 2 S-adenosyl-L-methionine = 2-methyladenosine(37) in tRNA + 5'-deoxyadenosine + L-methionine + 2 oxidized [2Fe-2S]-[ferredoxin] + S-adenosyl-L-homocysteine. Its function is as follows. Specifically methylates position 2 of adenine 2503 in 23S rRNA and position 2 of adenine 37 in tRNAs. m2A2503 modification seems to play a crucial role in the proofreading step occurring at the peptidyl transferase center and thus would serve to optimize ribosomal fidelity. The protein is Dual-specificity RNA methyltransferase RlmN of Nitratiruptor sp. (strain SB155-2).